The following is a 673-amino-acid chain: UvrABC system protein B (673 aa).

Residues 28-414 (ASILQNKRSQ…EAGGEIVEQL (387 aa)) form the Helicase ATP-binding domain. 41–48 (GITGSGKT) lines the ATP pocket. The Beta-hairpin motif lies at 94-117 (YYDYYQPEAYVPRTDTYIEKDMSI). Residues 433–595 (QVDDCLAEIR…ITPRTVKREI (163 aa)) form the Helicase C-terminal domain. The 36-residue stretch at 633–668 (RLKIKECEKEMKKAAKEFRFEEAADWRDQMRRYQQI) folds into the UVR domain.

Belongs to the UvrB family. Forms a heterotetramer with UvrA during the search for lesions. Interacts with UvrC in an incision complex.

It localises to the cytoplasm. Its function is as follows. The UvrABC repair system catalyzes the recognition and processing of DNA lesions. A damage recognition complex composed of 2 UvrA and 2 UvrB subunits scans DNA for abnormalities. Upon binding of the UvrA(2)B(2) complex to a putative damaged site, the DNA wraps around one UvrB monomer. DNA wrap is dependent on ATP binding by UvrB and probably causes local melting of the DNA helix, facilitating insertion of UvrB beta-hairpin between the DNA strands. Then UvrB probes one DNA strand for the presence of a lesion. If a lesion is found the UvrA subunits dissociate and the UvrB-DNA preincision complex is formed. This complex is subsequently bound by UvrC and the second UvrB is released. If no lesion is found, the DNA wraps around the other UvrB subunit that will check the other stand for damage. This Protochlamydia amoebophila (strain UWE25) protein is UvrABC system protein B.